Here is a 286-residue protein sequence, read N- to C-terminus: MKIIIPATSANIGPGFDSVGVALSKYLTIEVFEETDEWVIEHNLEHVPSDKNNLLIKTALKIEKGLQPHRIRMISDIPLARGLGSSSSVIVAGIELANQLAGLNMTADEKLLKATEIEGHPDNVAPAIFGNLVISSYVNKRVQAVVTEFPEASFVAFIPNYPLRTVESRGVLPSQMGYKKAVAASAIANVAVASLMAGDLEKAGKAIQSDMFHEPFRQLLVKEFCPIKQTAQELGAYATYLSGAGPTVMVLAPKDREDAIVLALEELNLDGTVHRLQVDTKGIAIV.

Position 78-88 (78-88 (PLARGLGSSSS)) interacts with ATP.

It belongs to the GHMP kinase family. Homoserine kinase subfamily.

Its subcellular location is the cytoplasm. It catalyses the reaction L-homoserine + ATP = O-phospho-L-homoserine + ADP + H(+). It functions in the pathway amino-acid biosynthesis; L-threonine biosynthesis; L-threonine from L-aspartate: step 4/5. Its function is as follows. Catalyzes the ATP-dependent phosphorylation of L-homoserine to L-homoserine phosphate. This is Homoserine kinase from Streptococcus suis (strain 98HAH33).